The sequence spans 454 residues: Immediate-early protein ICP-46 homolog (454 aa).

Residues 330–357 (EKDIETIEKYEKTIQELIVELHNLYLKR) are a coiled coil. The disordered stretch occupies residues 428–454 (SSPTASLSSLSPPSSNNNSPIRSPIRM).

Belongs to the IIV-6 393L family.

The sequence is that of Immediate-early protein ICP-46 homolog from Invertebrate iridescent virus 6 (IIV-6).